A 268-amino-acid polypeptide reads, in one-letter code: MARDRRDYYYHQAKEEGYRSRASFKLKQINEKHNVIKRGDSVVDLGAAPGGWLQVAKQLSGGKVLGVDLQRIDPIEGVETIQGDINAESTIKKIIKIVGEKGADVVLCDAAPNLSGNWSYDHARSIELATSALECAKKILKPKGNFAVKVFQGDMFNDYLDEVRNNFVRVKAYSPQASRSQSAEIYIIGKKFLTAPLRKGDKFVVDIEKLGSSGDGAVLIEGFVVFVKEVEVGEKVRIKISDVKPNFAFADVEERIESSETENREKSD.

Gly50, Trp52, Asp68, Asp84, and Asp109 together coordinate S-adenosyl-L-methionine. Lys149 functions as the Proton acceptor in the catalytic mechanism. Residues 196–254 form the TRAM domain; it reads PLRKGDKFVVDIEKLGSSGDGAVLIEGFVVFVKEVEVGEKVRIKISDVKPNFAFADVEE.

Belongs to the class I-like SAM-binding methyltransferase superfamily. RNA methyltransferase RlmE family.

The protein resides in the cytoplasm. It catalyses the reaction uridine(2552) in 23S rRNA + S-adenosyl-L-methionine = 2'-O-methyluridine(2552) in 23S rRNA + S-adenosyl-L-homocysteine + H(+). In terms of biological role, specifically methylates the uridine in position 2552 of 23S rRNA at the 2'-O position of the ribose in the fully assembled 50S ribosomal subunit. In Methanosarcina mazei (strain ATCC BAA-159 / DSM 3647 / Goe1 / Go1 / JCM 11833 / OCM 88) (Methanosarcina frisia), this protein is Ribosomal RNA large subunit methyltransferase E.